We begin with the raw amino-acid sequence, 416 residues long: 4-hydroxy-3-methylbut-2-en-1-yl diphosphate synthase (flavodoxin) (416 aa).

Residues Cys-304, Cys-307, Cys-350, and Glu-357 each coordinate [4Fe-4S] cluster.

This sequence belongs to the IspG family. Requires [4Fe-4S] cluster as cofactor.

It carries out the reaction (2E)-4-hydroxy-3-methylbut-2-enyl diphosphate + oxidized [flavodoxin] + H2O + 2 H(+) = 2-C-methyl-D-erythritol 2,4-cyclic diphosphate + reduced [flavodoxin]. The protein operates within isoprenoid biosynthesis; isopentenyl diphosphate biosynthesis via DXP pathway; isopentenyl diphosphate from 1-deoxy-D-xylulose 5-phosphate: step 5/6. Its function is as follows. Converts 2C-methyl-D-erythritol 2,4-cyclodiphosphate (ME-2,4cPP) into 1-hydroxy-2-methyl-2-(E)-butenyl 4-diphosphate. This is 4-hydroxy-3-methylbut-2-en-1-yl diphosphate synthase (flavodoxin) from Agrobacterium fabrum (strain C58 / ATCC 33970) (Agrobacterium tumefaciens (strain C58)).